The primary structure comprises 83 residues: MAFGAGAGGGRRPFFRRRKTCPFSGANAPKIDYKDVKLLSRYVSERGKIVPSRITAVSAKKQRELAQAIKRARFLGLLPYVIK.

It belongs to the bacterial ribosomal protein bS18 family. In terms of assembly, part of the 30S ribosomal subunit. Forms a tight heterodimer with protein bS6.

Binds as a heterodimer with protein bS6 to the central domain of the 16S rRNA, where it helps stabilize the platform of the 30S subunit. This chain is Small ribosomal subunit protein bS18, found in Methylobacterium radiotolerans (strain ATCC 27329 / DSM 1819 / JCM 2831 / NBRC 15690 / NCIMB 10815 / 0-1).